Here is a 132-residue protein sequence, read N- to C-terminus: MQRVTLTLDDDLLAALDALSARRGYHNRSEAVRDILRDALNQDPPSPESRRGYAVLSYVYEHEKRELASRLVATQHHHHDLSVATLHVHISHEDCLEIAVLKGDMAEVQHFADDVIAQRGVRHGHLQCLADD.

Residues histidine 76, histidine 87, histidine 89, and cysteine 95 each coordinate Ni(2+).

This sequence belongs to the transcriptional regulatory CopG/NikR family. As to quaternary structure, homotetramer. Ni(2+) is required as a cofactor.

Transcriptional repressor of the nikABCDE operon. Is active in the presence of excessive concentrations of intracellular nickel. This chain is Nickel-responsive regulator, found in Klebsiella pneumoniae (strain 342).